Consider the following 1437-residue polypeptide: CRISPR-associated endoribonuclease Cas13a (1437 aa).

2 HEPN-like fold regions span residues 460–626 and 1101–1437; these read LNAS…AMFE and EFRD…QLKN. The disordered stretch occupies residues 1377–1419; it reads EVKEKKKPSDNNTGKGYSKRDRQQDRKEYDKYKEKKKKEGNFL. Positions 1394–1416 are enriched in basic and acidic residues; sequence SKRDRQQDRKEYDKYKEKKKKEG.

Belongs to the CRISPR-associated endoribonuclease Cas13a family. A divalent metal cation serves as cofactor.

Its activity is regulated as follows. Target RNA acts as an activator for non-specific ssRNA degradation. Its function is as follows. CRISPR (clustered regularly interspaced short palindromic repeat), is an adaptive immune system that provides protection against mobile genetic elements (viruses, transposable elements and conjugative plasmids). CRISPR clusters contain sequences complementary to antecedent mobile elements and target invading nucleic acids. Unlike many single-component effectors, this CRISPR-Cas system targets RNA. CRISPR clusters are transcribed from pre-CRISPR RNA (crRNA) and processed into crRNA by this protein. Cleaves linear target ssRNA in a pre-crRNA-dependent fashion, preferentially around A residues. Binding a viable target RNA target activates this protein for non-specific RNA degradation in vitro (called collateral RNA degradation), but it is not very sensitive as it requires nanomolar levels of viable target RNA. This is CRISPR-associated endoribonuclease Cas13a from Lachnospiraceae bacterium (strain NK4A179).